The primary structure comprises 356 residues: 4-hydroxy-3-methylbut-2-en-1-yl diphosphate synthase (flavodoxin) (356 aa).

The [4Fe-4S] cluster site is built by Cys-262, Cys-265, Cys-297, and Glu-304.

It belongs to the IspG family. [4Fe-4S] cluster serves as cofactor.

It catalyses the reaction (2E)-4-hydroxy-3-methylbut-2-enyl diphosphate + oxidized [flavodoxin] + H2O + 2 H(+) = 2-C-methyl-D-erythritol 2,4-cyclic diphosphate + reduced [flavodoxin]. It participates in isoprenoid biosynthesis; isopentenyl diphosphate biosynthesis via DXP pathway; isopentenyl diphosphate from 1-deoxy-D-xylulose 5-phosphate: step 5/6. Functionally, converts 2C-methyl-D-erythritol 2,4-cyclodiphosphate (ME-2,4cPP) into 1-hydroxy-2-methyl-2-(E)-butenyl 4-diphosphate. The protein is 4-hydroxy-3-methylbut-2-en-1-yl diphosphate synthase (flavodoxin) of Campylobacter fetus subsp. fetus (strain 82-40).